Consider the following 489-residue polypeptide: Probable cytochrome P450 CYP44 (489 aa).

The interval 12-31 (VEKCPYSPTSSPNTPPRTFS) is disordered. The span at 16–29 (PYSPTSSPNTPPRT) shows a compositional bias: low complexity. Position 438 (cysteine 438) interacts with heme.

It belongs to the cytochrome P450 family. Requires heme as cofactor.

Functionally, cytochromes P450 are a group of heme-thiolate monooxygenases. They oxidize a variety of structurally unrelated compounds, including steroids, fatty acids, and xenobiotics. The sequence is that of Probable cytochrome P450 CYP44 (cyp-44A1) from Caenorhabditis elegans.